A 159-amino-acid chain; its full sequence is 6,7-dimethyl-8-ribityllumazine synthase (159 aa).

5-amino-6-(D-ribitylamino)uracil contacts are provided by residues tyrosine 23, alanine 58–glutamate 60, and threonine 82–isoleucine 84. Histidine 90 serves as the catalytic Proton donor. Isoleucine 115 is a binding site for 5-amino-6-(D-ribitylamino)uracil. Arginine 129 provides a ligand contact to (2S)-2-hydroxy-3-oxobutyl phosphate.

It belongs to the DMRL synthase family. Forms an icosahedral capsid composed of 60 subunits, arranged as a dodecamer of pentamers.

It catalyses the reaction (2S)-2-hydroxy-3-oxobutyl phosphate + 5-amino-6-(D-ribitylamino)uracil = 6,7-dimethyl-8-(1-D-ribityl)lumazine + phosphate + 2 H2O + H(+). The protein operates within cofactor biosynthesis; riboflavin biosynthesis; riboflavin from 2-hydroxy-3-oxobutyl phosphate and 5-amino-6-(D-ribitylamino)uracil: step 1/2. Catalyzes the formation of 6,7-dimethyl-8-ribityllumazine by condensation of 5-amino-6-(D-ribitylamino)uracil with 3,4-dihydroxy-2-butanone 4-phosphate. This is the penultimate step in the biosynthesis of riboflavin. This chain is 6,7-dimethyl-8-ribityllumazine synthase, found in Buchnera aphidicola subsp. Baizongia pistaciae (strain Bp).